The sequence spans 105 residues: Integration host factor subunit alpha (105 aa).

Belongs to the bacterial histone-like protein family. Heterodimer of an alpha and a beta chain.

Functionally, this protein is one of the two subunits of integration host factor, a specific DNA-binding protein that functions in genetic recombination as well as in transcriptional and translational control. This chain is Integration host factor subunit alpha, found in Rhodospirillum rubrum (strain ATCC 11170 / ATH 1.1.1 / DSM 467 / LMG 4362 / NCIMB 8255 / S1).